Consider the following 310-residue polypeptide: Ribosomal RNA small subunit methyltransferase H (310 aa).

Residues 33 to 35 (AGH), Asp-53, Tyr-83, Asp-100, and Gln-107 each bind S-adenosyl-L-methionine.

The protein belongs to the methyltransferase superfamily. RsmH family.

The protein resides in the cytoplasm. It catalyses the reaction cytidine(1402) in 16S rRNA + S-adenosyl-L-methionine = N(4)-methylcytidine(1402) in 16S rRNA + S-adenosyl-L-homocysteine + H(+). Functionally, specifically methylates the N4 position of cytidine in position 1402 (C1402) of 16S rRNA. The sequence is that of Ribosomal RNA small subunit methyltransferase H from Clostridium perfringens (strain ATCC 13124 / DSM 756 / JCM 1290 / NCIMB 6125 / NCTC 8237 / Type A).